Here is a 113-residue protein sequence, read N- to C-terminus: Transcriptional regulator RamA (113 aa).

The HTH araC/xylS-type domain occupies 9-107; the sequence is DTIVEWIDDN…NQPPGAYRKE (99 aa). 2 consecutive DNA-binding regions (H-T-H motif) follow at residues 26-47 and 74-97; these read DDIARHAGYSKWHLQRLFLQYK and VYDICLKYGFDSQQTFTRVFTRTF.

Monomer. Interacts with the C-terminus of RNAP subunit RpoA when part of class I or class II promoter complexes. Also interacts with sigma-70/RpoD in class II promoter complexes.

In terms of biological role, transcriptional regulator. Binds to regulatory regions of target genes, including its own gene, efflux pump operon acrAB, antisense RNA gene micF, and various genes involved in lipid A biosynthesis, including lpxO and lpxL-2. Regulates expression of many genes, perhaps including its own; activates various lipid A biosynthetic genes, and as a result of activating acrAB, confers multidrug resistance. Plays a role in virulence and survival in host cells. The protein is Transcriptional regulator RamA of Klebsiella pneumoniae subsp. pneumoniae (strain HS11286).